A 41-amino-acid polypeptide reads, in one-letter code: Inducible serine protease inhibitor 3 (41 aa).

Functionally, inhibits trypsin and the toxin proteases PR1 and PR2 of M.anisopliae. Does not inhibit chymotrypsin, subtilisin Carlsberg, proteinase K and porcine pancreatic elastase. The sequence is that of Inducible serine protease inhibitor 3 from Galleria mellonella (Greater wax moth).